An 88-amino-acid polypeptide reads, in one-letter code: Small ribosomal subunit protein bS20 (88 aa).

Residues 1-27 are disordered; sequence MANIPSAKKRARQAEKRRKHNQSQRSM. The segment covering 7–22 has biased composition (basic residues); it reads AKKRARQAEKRRKHNQ.

This sequence belongs to the bacterial ribosomal protein bS20 family.

Functionally, binds directly to 16S ribosomal RNA. This chain is Small ribosomal subunit protein bS20, found in Alkalilimnicola ehrlichii (strain ATCC BAA-1101 / DSM 17681 / MLHE-1).